A 280-amino-acid chain; its full sequence is MKSKTWIFRDVLSSHRTKAFDSLLCRRLPVSKATKHLQLGEHFLFFPPSFEKLDRDGYFNYQNPASLLGNPDLRYRRRIWGQGELVQYLPVTLDQEYTCHESIKYVKKIRDEHVVCIERTLLQERPENVSSPMDICLFERRVLMYTNSPANKTAVKMPVGEENYKILKNFTVTDMDIVAYGQMSLNPHRIHWDKEYSRYVEGYDDIIMQGPFSVQLLQKCIQPFLEQPIRQLRYRNLNYIYPNTTLSICQSLSSSSGMYTFQIRDLQKANLVYMKADVFC.

The protein belongs to the HTD2 family.

Its subcellular location is the mitochondrion. In terms of biological role, mitochondrial 3-hydroxyacyl-thioester dehydratase involved in fatty acid biosynthesis. Required for respiratory growth and for normal mitochondrial morphology. The chain is Hydroxyacyl-thioester dehydratase type 2, mitochondrial (HTD2) from Saccharomyces cerevisiae (strain ATCC 204508 / S288c) (Baker's yeast).